An 825-amino-acid chain; its full sequence is MEPRPGTSSRADPGPERPPRQTPGTQPAAPHAWGMLNDMQWLASSDSEEETEVGISDDDLHRDSTSEAGSTDTEMFEAGLMDAATPPARPPAERQGSPTPADAQGSCGGGPVGEEEAEAGGGGDVCAVCTDEIAPPLRCQSFPCLHPFCIPCMKTWIPLRNTCPLCNTPVAYLIVGVTASGSFSTIPIVNDPRTRVEAEAAVRAGTAVDFIWTGNPRTAPRSLSLGGHTVRALSPTPPWPGTDDEDDDLADVDYVPPAPRRAPRRGGGGAGATRGTSQPAATRPAPPGAPRSSSSGGAPLRAGVGSGSGGGPAVAAVVPRVASLPPAAGGGRAQARRVGEDAAAAEGRTPPARQPRAAQEPPIVISDSPPPSPRRPAGPGPLSFVSSSSAQVSSGPGGGGLPQSSGRAARPRAAVAPRVRSPPRAAAAPVVSASADAAGPAPPAVPVDAHRAPRSRMTQAQTDTQAQSLGRAGATDARGSGGPGAEGGPGVPRGTNTPGAAPHAAEGAAARPRKRRGSDSGPAASSSASSSAAPRSPLAPQGVGAKRAAPRRAPDSDSGDRGHGPLAPASAGAAPPSASPSSQAAVAAASSSSASSSSASSSSASSSSASSSSASSSSASSSSASSSAGGAGGSVASASGAGERRETSLGPRAAAPRGPRKCARKTRHAEGGPEPGARDPAPGLTRYLPIAGVSSVVALAPYVNKTVTGDCLPVLDMETGHIGAYVVLVDQTGNVADLLRAAAPAWSRRTLLPEHARNCVRPPDYPTPPASEWNSLWMTPVGNMLFDQGTLVGALDFHGLRSRHPWSREQGAPAPAGDAPAGHGE.

Polar residues predominate over residues 1 to 10 (MEPRPGTSSR). Residues 1 to 121 (MEPRPGTSSR…VGEEEAEAGG (121 aa)) are disordered. Over residues 46-57 (DSEEETEVGISD) the composition is skewed to acidic residues. The RING-type zinc finger occupies 126-167 (CAVCTDEIAPPLRCQSFPCLHPFCIPCMKTWIPLRNTCPLCN). Disordered stretches follow at residues 221-312 (RSLS…GGGP), 325-683 (PPAA…PAPG), and 803-825 (RHPW…GHGE). Residues 242–251 (TDDEDDDLAD) show a composition bias toward acidic residues. 3 stretches are compositionally biased toward low complexity: residues 273–283 (TRGTSQPAATR), 290–303 (PRSS…LRAG), and 350–367 (PPAR…VISD). The segment covering 368 to 379 (SPPPSPRRPAGP) has biased composition (pro residues). Low complexity-rich tracts occupy residues 380–394 (GPLS…QVSS) and 402–439 (PQSS…DAAG). The span at 456 to 468 (RMTQAQTDTQAQS) shows a compositional bias: polar residues. Gly residues predominate over residues 479-491 (GSGGPGAEGGPGV). 2 stretches are compositionally biased toward low complexity: residues 492–510 (PRGT…GAAA) and 519–540 (DSGP…PLAP). The span at 552-563 (RAPDSDSGDRGH) shows a compositional bias: basic and acidic residues. Residues 567–641 (APASAGAAPP…GGSVASASGA (75 aa)) are compositionally biased toward low complexity. Residues 658-667 (GPRKCARKTR) show a composition bias toward basic residues. Low complexity predominate over residues 811-825 (GAPAPAGDAPAGHGE).

In terms of processing, auto-ubiquitinated.

It catalyses the reaction S-ubiquitinyl-[E2 ubiquitin-conjugating enzyme]-L-cysteine + [acceptor protein]-L-lysine = [E2 ubiquitin-conjugating enzyme]-L-cysteine + N(6)-ubiquitinyl-[acceptor protein]-L-lysine.. Its function is as follows. Evades nuclear antiviral defenses triggered by dsDNA viruses. Acts during the initial stages of lytic infection and the reactivation of latent viral genome. Prevents the antiviral effect of nuclear bodies by degrading host PML and SP100. Prevents antiviral response to viral DNA induced by IFI16 by degrading it. Additionally, inhibits host IRF3 nuclear signaling to prevent interferon production by the infected cells. The chain is E3 ubiquitin-protein ligase ICP0 (RL2) from Homo sapiens (Human).